The primary structure comprises 418 residues: Intracellular coagulation inhibitor 1 (418 aa).

The N-terminal stretch at 1–24 is a signal peptide; sequence MKLGDWKFCLLLFQLMFLTNVCLS. 2 N-linked (GlcNAc...) asparagine glycosylation sites follow: N49 and N404.

The protein belongs to the serpin family. As to quaternary structure, monomer. Forms a covalent heterodimer with clotting factor C. Interacts with big defensin. Post-translationally, N-glycosylated. In terms of tissue distribution, expressed in hemocytes (at protein level).

Its subcellular location is the secreted. Its function is as follows. Serine protease inhibitor that specifically inhibits clotting factor C. Does not inhibit clotting factor B or proclotting enzyme. The protein is Intracellular coagulation inhibitor 1 of Tachypleus tridentatus (Japanese horseshoe crab).